The chain runs to 896 residues: Translation initiation factor IF-2 (896 aa).

Basic and acidic residues-rich tracts occupy residues 94–159 (KRDP…KDKV) and 166–219 (DMTK…EKNW). The disordered stretch occupies residues 94–307 (KRDPQEAERL…GSALQQGFQK (214 aa)). Positions 256–271 (GRGRNAKAARPAKKGN) are enriched in basic residues. Positions 272-285 (KHAESKADREEARA) are enriched in basic and acidic residues. Residues 395–564 (PRAPVVTIMG…LLQAEVLELK (170 aa)) form the tr-type G domain. The segment at 404–411 (GHVDHGKT) is G1. Residue 404–411 (GHVDHGKT) coordinates GTP. The G2 stretch occupies residues 429-433 (GITQH). The G3 stretch occupies residues 450–453 (DTPG). GTP-binding positions include 450–454 (DTPGH) and 504–507 (NKID). The tract at residues 504–507 (NKID) is G4. The interval 540–542 (SAK) is G5.

Belongs to the TRAFAC class translation factor GTPase superfamily. Classic translation factor GTPase family. IF-2 subfamily.

It is found in the cytoplasm. In terms of biological role, one of the essential components for the initiation of protein synthesis. Protects formylmethionyl-tRNA from spontaneous hydrolysis and promotes its binding to the 30S ribosomal subunits. Also involved in the hydrolysis of GTP during the formation of the 70S ribosomal complex. The protein is Translation initiation factor IF-2 (infB) of Klebsiella oxytoca.